A 182-amino-acid polypeptide reads, in one-letter code: Ribosome-recycling factor (182 aa).

The segment at 137 to 158 (KKSEKESEISEDQSRDEQDNVQ) is disordered.

The protein belongs to the RRF family.

The protein localises to the cytoplasm. Responsible for the release of ribosomes from messenger RNA at the termination of protein biosynthesis. May increase the efficiency of translation by recycling ribosomes from one round of translation to another. This chain is Ribosome-recycling factor, found in Prochlorococcus marinus (strain MIT 9211).